We begin with the raw amino-acid sequence, 522 residues long: MSDAAAPEEQDELSGGSVQELLPGLQRDLEAEVIRGFIANIAIYPVLLLYFFGTFAYVTRNVVPYEFIDEQFHIGQTITYLKGHWFTWDPKITTPPGLYILGWLNYKVLKPLLKSWSTLTILRLVNAFGGLVYFPLVVLRPIFLFNAISFWPVALMSFPLMATYYYLYYTDVWSTIFIIQSLSIGLTMPFGLSKSIWLSALFAGISCLFRQTNIVWCGFIMLIVVERQAIIAKQFNTHGLNNYLKLFIHSVEEFQTLVLPYALNFVGFFLYLIWNRSITLGDKSNHNAGIHLVQVFYCFAFLTVFSVPLWFSKNFLRMYLERTNRKQVQVFFEIFLIMMVIRYFTKVHPFLLADNRHYTFYLFKRLINHNRRIIKYGLMAPIYHFCTFVYLEILRPSELLFDPISPLPIKDPNLLPVQLTHISWTALILCTFATVVPSPLFEPRYYILPYFFWRLFITCSAEPIWGEIVPGKSNEEPVTISSTSRLFLEFVWFILIDIVTLIIFVRYSFPWASEAFMQRIIW.

6 helical membrane passes run 36 to 56 (GFIANIAIYPVLLLYFFGTFA), 119 to 139 (LTILRLVNAFGGLVYFPLVVL), 142 to 162 (IFLFNAISFWPVALMSFPLMA), 172 to 192 (VWSTIFIIQSLSIGLTMPFGL), 205 to 225 (ISCLFRQTNIVWCGFIMLIVV), and 254 to 274 (FQTLVLPYALNFVGFFLYLIW). Asn275 is a glycosylation site (N-linked (GlcNAc...) asparagine). A run of 6 helical transmembrane segments spans residues 292–312 (LVQVFYCFAFLTVFSVPLWFS), 330–350 (VFFEIFLIMMVIRYFTKVHPF), 373–393 (IIKYGLMAPIYHFCTFVYLEI), 421–441 (HISWTALILCTFATVVPSPLF), 446–466 (YILPYFFWRLFITCSAEPIWG), and 485–505 (RLFLEFVWFILIDIVTLIIFV).

This sequence belongs to the ALG10 glucosyltransferase family.

The protein localises to the endoplasmic reticulum membrane. It carries out the reaction an alpha-D-Glc-(1-&gt;3)-alpha-D-Glc-(1-&gt;3)-alpha-D-Man-(1-&gt;2)-alpha-D-Man-(1-&gt;2)-alpha-D-Man-(1-&gt;3)-[alpha-D-Man-(1-&gt;2)-alpha-D-Man-(1-&gt;3)-[alpha-D-Man-(1-&gt;2)-alpha-D-Man-(1-&gt;6)]-alpha-D-Man-(1-&gt;6)]-beta-D-Man-(1-&gt;4)-beta-D-GlcNAc-(1-&gt;4)-alpha-D-GlcNAc-diphospho-di-trans,poly-cis-dolichol + a di-trans,poly-cis-dolichyl beta-D-glucosyl phosphate = a alpha-D-Glc-(1-&gt;2)-alpha-D-Glc-(1-&gt;3)-alpha-D-Glc-(1-&gt;3)-alpha-D-Man-(1-&gt;2)-alpha-D-Man-(1-&gt;2)-alpha-D-Man-(1-&gt;3)-[alpha-D-Man-(1-&gt;2)-alpha-D-Man-(1-&gt;3)-[alpha-D-Man-(1-&gt;2)-alpha-D-Man-(1-&gt;6)]-alpha-D-Man-(1-&gt;6)]-beta-D-Man-(1-&gt;4)-beta-D-GlcNAc-(1-&gt;4)-alpha-D-GlcNAc-diphospho-di-trans,poly-cis-dolichol + a di-trans,poly-cis-dolichyl phosphate + H(+). It participates in protein modification; protein glycosylation. In terms of biological role, dol-P-Glc:Glc(2)Man(9)GlcNAc(2)-PP-Dol alpha-1,2-glucosyltransferase that operates in the biosynthetic pathway of dolichol-linked oligosaccharides, the glycan precursors employed in protein asparagine (N)-glycosylation. The assembly of dolichol-linked oligosaccharides begins on the cytosolic side of the endoplasmic reticulum membrane and finishes in its lumen. The sequential addition of sugars to dolichol pyrophosphate produces dolichol-linked oligosaccharides containing fourteen sugars, including two GlcNAcs, nine mannoses and three glucoses. Once assembled, the oligosaccharide is transferred from the lipid to nascent proteins by oligosaccharyltransferases. In the lumen of the endoplasmic reticulum, adds the third and last glucose residue from dolichyl phosphate glucose (Dol-P-Glc) onto the lipid-linked oligosaccharide intermediate Glc(2)Man(9)GlcNAc(2)-PP-Dol to produce Glc(3)Man(9)GlcNAc(2)-PP-Dol. The protein is Dol-P-Glc:Glc(2)Man(9)GlcNAc(2)-PP-Dol alpha-1,2-glucosyltransferase (ALG10) of Candida glabrata (strain ATCC 2001 / BCRC 20586 / JCM 3761 / NBRC 0622 / NRRL Y-65 / CBS 138) (Yeast).